Consider the following 1170-residue polypeptide: PAN2-PAN3 deadenylation complex catalytic subunit PAN2 (1170 aa).

WD repeat units lie at residues glutamate 104–glutamine 144 and asparagine 280–aspartate 319. Positions aspartate 319–proline 458 are linker. Residues arginine 399–glutamate 459 form a disordered region. The span at valine 443–glutamate 452 shows a compositional bias: acidic residues. A USP domain is found at glutamate 459 to lysine 846. In terms of domain architecture, Exonuclease spans valine 894–tyrosine 1067. A divalent metal cation is bound by residues aspartate 897, glutamate 899, aspartate 1006, and aspartate 1059. The disordered stretch occupies residues asparagine 1094–lysine 1170. A compositionally biased stretch (basic and acidic residues) spans proline 1098–glutamine 1108. Polar residues predominate over residues arginine 1109 to proline 1119.

It belongs to the peptidase C19 family. PAN2 subfamily. As to quaternary structure, forms a heterotrimer with an asymmetric homodimer of the regulatory subunit PAN3 to form the poly(A)-nuclease (PAN) deadenylation complex. A divalent metal cation serves as cofactor.

It localises to the cytoplasm. The enzyme catalyses Exonucleolytic cleavage of poly(A) to 5'-AMP.. Its activity is regulated as follows. Positively regulated by the regulatory subunit PAN3. Its function is as follows. Catalytic subunit of the poly(A)-nuclease (PAN) deadenylation complex, one of two cytoplasmic mRNA deadenylases involved in mRNA turnover. PAN specifically shortens poly(A) tails of RNA and the activity is stimulated by poly(A)-binding protein PAB1. PAN deadenylation is followed by rapid degradation of the shortened mRNA tails by the CCR4-NOT complex. Deadenylated mRNAs are then degraded by two alternative mechanisms, namely exosome-mediated 3'-5' exonucleolytic degradation, or deadenylation-dependent mRNA decaping and subsequent 5'-3' exonucleolytic degradation by XRN1. May also be involved in post-transcriptional maturation of mRNA poly(A) tails. This Chaetomium thermophilum (strain DSM 1495 / CBS 144.50 / IMI 039719) (Thermochaetoides thermophila) protein is PAN2-PAN3 deadenylation complex catalytic subunit PAN2.